A 119-amino-acid polypeptide reads, in one-letter code: Large ribosomal subunit protein uL18 (119 aa).

This sequence belongs to the universal ribosomal protein uL18 family. Part of the 50S ribosomal subunit; part of the 5S rRNA/L5/L18/L25 subcomplex. Contacts the 5S and 23S rRNAs.

Functionally, this is one of the proteins that bind and probably mediate the attachment of the 5S RNA into the large ribosomal subunit, where it forms part of the central protuberance. The sequence is that of Large ribosomal subunit protein uL18 from Borrelia recurrentis (strain A1).